The chain runs to 168 residues: MALNLEDKKAVVAEVTAQVAKASTIVVAEYRGITVGDLTKLRAQARQQGVYLRVLKNTLARRAVEGTPFAELAEQMTGPLIYGISEDAVAPAKVLNDFAKGNDKLVLRAGSYEGKVLDAAGVKALASIPSREELLSKLLFVMQAPVSGFARALAALAEKKQSEEGAAA.

The protein belongs to the universal ribosomal protein uL10 family. Part of the ribosomal stalk of the 50S ribosomal subunit. The N-terminus interacts with L11 and the large rRNA to form the base of the stalk. The C-terminus forms an elongated spine to which L12 dimers bind in a sequential fashion forming a multimeric L10(L12)X complex.

In terms of biological role, forms part of the ribosomal stalk, playing a central role in the interaction of the ribosome with GTP-bound translation factors. The protein is Large ribosomal subunit protein uL10 of Ralstonia nicotianae (strain ATCC BAA-1114 / GMI1000) (Ralstonia solanacearum).